A 429-amino-acid chain; its full sequence is Inner membrane transport protein RhmT (429 aa).

Topologically, residues 1–16 are cytoplasmic; sequence MSTALLDAVVKKNRVR. The chain crosses the membrane as a helical span at residues 17–37; sequence LIPFMLALYVLAFLDRSNIGF. Over 38 to 54 the chain is Periplasmic; it reads AKQTYQIDTGLSNEAYA. A helical membrane pass occupies residues 55–75; that stretch reads LGAGIFFVVYAFLGVPANLLM. Residues 76–81 lie on the Cytoplasmic side of the membrane; sequence RKLGAR. The chain crosses the membrane as a helical span at residues 82 to 102; it reads TWIGTTTLLWGFLSAAMAWAD. Residues 103-143 lie on the Periplasmic side of the membrane; sequence TEAKFLIVRTLLRAAEAGFFPGMIYLTSQWFPQRNRASIMG. Residues 144 to 164 traverse the membrane as a helical segment; that stretch reads LFYMGAPLALTLGSPLSGALL. Residues 165-174 lie on the Cytoplasmic side of the membrane; it reads EMHGFMGHPG. The chain crosses the membrane as a helical span at residues 175–195; it reads WFWMFVIEGLLAVGAGVFTFF. The Periplasmic segment spans residues 196-242; that stretch reads WLDDTPEQARFLSKQEKTLLINQLASEEQQKVTSRLSDALRNGRVWQ. A helical transmembrane segment spans residues 243 to 263; sequence LAIIYLTIQVAVYGLIFFLPT. Residues 264–274 lie on the Cytoplasmic side of the membrane; that stretch reads QVAALLGTKVG. A helical transmembrane segment spans residues 275–295; it reads FTASVVTAIPWVAALFGTWLI. Residues 296 to 324 are Periplasmic-facing; sequence PRYSDKTGERRNVAALTLLAAGIGIGLSG. A helical membrane pass occupies residues 325 to 345; that stretch reads LLSPVMAIVALCVAAIGFIAV. Topologically, residues 346-361 are cytoplasmic; the sequence is QPVFWTMPTQLLSGTA. Residues 362–382 traverse the membrane as a helical segment; that stretch reads LAAGIGFVNLFGAVGGFIAPI. The Periplasmic segment spans residues 383-394; that stretch reads LRVKAETLFASD. The helical transmembrane segment at 395-415 threads the bilayer; it reads AAGLLTLAAVAVIGSLIIFTL. Residues 416–429 lie on the Cytoplasmic side of the membrane; that stretch reads RVNRTVAQTDVAHH.

Belongs to the major facilitator superfamily. Phthalate permease family.

It localises to the cell inner membrane. This is Inner membrane transport protein RhmT (rhmT) from Escherichia coli (strain K12).